The sequence spans 397 residues: Dual-specificity RNA methyltransferase RlmN (397 aa).

The Proton acceptor role is filled by glutamate 116. Residues 122–366 form the Radical SAM core domain; sequence EDDRGTLCIS…SPIRKTRGDD (245 aa). A disulfide bridge connects residues cysteine 129 and cysteine 371. The [4Fe-4S] cluster site is built by cysteine 136, cysteine 140, and cysteine 143. S-adenosyl-L-methionine-binding positions include 195–196, serine 227, 249–251, and asparagine 328; these read GE and SFH. The active-site S-methylcysteine intermediate is the cysteine 371.

This sequence belongs to the radical SAM superfamily. RlmN family. Requires [4Fe-4S] cluster as cofactor.

It localises to the cytoplasm. It carries out the reaction adenosine(2503) in 23S rRNA + 2 reduced [2Fe-2S]-[ferredoxin] + 2 S-adenosyl-L-methionine = 2-methyladenosine(2503) in 23S rRNA + 5'-deoxyadenosine + L-methionine + 2 oxidized [2Fe-2S]-[ferredoxin] + S-adenosyl-L-homocysteine. The enzyme catalyses adenosine(37) in tRNA + 2 reduced [2Fe-2S]-[ferredoxin] + 2 S-adenosyl-L-methionine = 2-methyladenosine(37) in tRNA + 5'-deoxyadenosine + L-methionine + 2 oxidized [2Fe-2S]-[ferredoxin] + S-adenosyl-L-homocysteine. Specifically methylates position 2 of adenine 2503 in 23S rRNA and position 2 of adenine 37 in tRNAs. m2A2503 modification seems to play a crucial role in the proofreading step occurring at the peptidyl transferase center and thus would serve to optimize ribosomal fidelity. This chain is Dual-specificity RNA methyltransferase RlmN, found in Ruegeria sp. (strain TM1040) (Silicibacter sp.).